The chain runs to 136 residues: Nucleoside diphosphate kinase (136 aa).

Lys-10, Phe-58, Arg-86, Thr-92, Arg-104, and Asn-114 together coordinate ATP. The active-site Pros-phosphohistidine intermediate is His-117.

Belongs to the NDK family. Homotetramer. The cofactor is Mg(2+).

The protein localises to the cytoplasm. It carries out the reaction a 2'-deoxyribonucleoside 5'-diphosphate + ATP = a 2'-deoxyribonucleoside 5'-triphosphate + ADP. The enzyme catalyses a ribonucleoside 5'-diphosphate + ATP = a ribonucleoside 5'-triphosphate + ADP. Functionally, major role in the synthesis of nucleoside triphosphates other than ATP. The ATP gamma phosphate is transferred to the NDP beta phosphate via a ping-pong mechanism, using a phosphorylated active-site intermediate. In Mycobacterium ulcerans (strain Agy99), this protein is Nucleoside diphosphate kinase.